The chain runs to 1042 residues: Sarcoplasmic/endoplasmic reticulum calcium ATPase 2 (1042 aa).

Residues 1 to 48 (MENAHTKTVEEVLGHFGVNESTGLSLEQVKKLKERWGSNELPAEEGKT) are Cytoplasmic-facing. Ser38 is subject to Phosphoserine. Residues 49-69 (LLELVIEQFEDLLVRILLLAA) form a helical membrane-spanning segment. The Lumenal segment spans residues 70–89 (CISFVLAWFEEGEETITAFV). A helical membrane pass occupies residues 90–110 (EPFVILLILVANAIVGVWQER). Residues 111 to 253 (NAENAIEALK…QERTPLQQKL (143 aa)) lie on the Cytoplasmic side of the membrane. Residues 254–273 (DEFGEQLSKVISLICIAVWI) form a helical membrane-spanning segment. The Lumenal segment spans residues 274 to 295 (INIGHFNDPVHGGSWIRGAIYY). Tyr294 and Tyr295 each carry 3'-nitrotyrosine. Residues 296-313 (FKIAVALAVAAIPEGLPA) traverse the membrane as a helical segment. The Ca(2+) site is built by Val304, Ala305, Ile307, and Glu309. At 314-756 (VITTCLALGT…EEGRAIYNNM (443 aa)) the chain is on the cytoplasmic side. Asp351 serves as the catalytic 4-aspartylphosphate intermediate. Positions 351 and 353 each coordinate Mg(2+). Thr353 is a binding site for ATP. Thr441 carries the post-translational modification Phosphothreonine. Residues Glu442, Arg489, and Lys514 each contribute to the ATP site. Ser531 is subject to Phosphoserine. Arg559 is a binding site for ATP. The tract at residues 575-594 (MNLEDSANFIKYETNLTFVG) is interaction with HAX1. Ser580 is modified (phosphoserine). Residues Thr624, Gly625, and Asp626 each contribute to the ATP site. Ser663 carries the post-translational modification Phosphoserine. Residues Arg677 and Lys683 each coordinate ATP. Asp702 is a Mg(2+) binding site. An ATP-binding site is contributed by Asn705. The helical transmembrane segment at 757-776 (KQFIRYLISSNVGEVVCIFL) threads the bilayer. Ca(2+) contacts are provided by Asn767 and Glu770. At 777–786 (TAALGFPEAL) the chain is on the lumenal side. Residues 787–807 (IPVQLLWVNLVTDGLPATALG) traverse the membrane as a helical segment. The tract at residues 787–807 (IPVQLLWVNLVTDGLPATALG) is interaction with PLN. Residues 788–1042 (PVQLLWVNLV…DTNFSDMFWS (255 aa)) form an interaction with TMEM64 and PDIA3 region. Asn795, Thr798, and Asp799 together coordinate Ca(2+). At 808-827 (FNPPDLDIMNKPPRNPKEPL) the chain is on the cytoplasmic side. Residues 828-850 (ISGWLFFRYLAIGCYVGAATVGA) traverse the membrane as a helical segment. Residues 851–896 (AAWWFIAADGGPRVTFYQLSHFLQCKEDNPDFEGVDCAVFESPYPM) lie on the Lumenal side of the membrane. An intrachain disulfide couples Cys875 to Cys887. The chain crosses the membrane as a helical span at residues 897–916 (TMALSVLVTIEMCNALNSLS). Glu907 contributes to the Ca(2+) binding site. The Cytoplasmic portion of the chain corresponds to 917–929 (ENQSLLRMPPWEN). Residues 930–948 (IWLVGSICLSMSLHFLILY) form a helical membrane-spanning segment. Residues 931-942 (WLVGSICLSMSL) are interaction with PLN. Topologically, residues 949–963 (VEPLPLIFQITPLNL) are lumenal. Residues 964 to 984 (TQWLMVLKISLPVILMDETLK) form a helical membrane-spanning segment. The Cytoplasmic segment spans residues 985 to 1042 (FVARNYLEPGKECVQPATKSCSFSACTDGISWPFVLLIMPLVIWVYSTDTNFSDMFWS).

It belongs to the cation transport ATPase (P-type) (TC 3.A.3) family. Type IIA subfamily. As to quaternary structure, interacts with sarcolipin (SLN); the interaction inhibits ATP2A2 Ca(2+) affinity. Interacts with phospholamban (PLN); the interaction inhibits ATP2A2 Ca(2+) affinity. Interacts with myoregulin (MRLN). Interacts with ARLN and ERLN; the interactions inhibit ATP2A2 Ca(2+) affinity. Interacts with STRIT1/DWORF; the interaction results in activation of ATP2A2. Interacts with the monomeric forms of SLN, PLN, ARLN, ERLN and STRI1/DWORF. Interacts with HAX1. Interacts with S100A8 and S100A9. Interacts with SLC35G1 and STIM1. Interacts with TMEM203. Interacts with TMEM64 and PDIA3. Interacts with TMX1. Interacts with TMX2. Interacts with VMP1; VMP1 competes with PLN and SLN to prevent them from forming an inhibitory complex with ATP2A2. Interacts with ULK1. Interacts with S100A1 in a Ca(2+)-dependent manner. Interacts with TUNAR. Interacts with FLVCR2; this interaction occurs in the absence of heme and promotes ATP2A2 proteasomal degradation; this complex is dissociated upon heme binding. Interacts with FNIP1. In terms of assembly, interacts with TRAM2 (via C-terminus). Mg(2+) is required as a cofactor. Nitrated under oxidative stress. Nitration on the two tyrosine residues inhibits catalytic activity. In terms of processing, serotonylated on Gln residues by TGM2 in response to hypoxia, leading to its inactivation. In terms of tissue distribution, detected in heart left ventricle (at protein level). Isoform 2 is highly expressed in heart and slow twitch skeletal muscle. Isoform 1 is widely expressed.

It is found in the endoplasmic reticulum membrane. The protein resides in the sarcoplasmic reticulum membrane. It carries out the reaction Ca(2+)(in) + ATP + H2O = Ca(2+)(out) + ADP + phosphate + H(+). Its activity is regulated as follows. Has different conformational states with differential Ca2+ affinity. The E1 conformational state (active form) shows high Ca(2+) affinity, while the E2 state exhibits low Ca(2+) affinity. Binding of ATP allosterically increases its affinity for subsequent binding of Ca2+. Reversibly inhibited by phospholamban (PLN) at low calcium concentrations. PLN inhibits ATP2A2 Ca(2+) affinity by disrupting its allosteric activation by ATP. Inhibited by sarcolipin (SLN) and myoregulin (MRLN). The inhibition is blocked by VMP1. Enhanced by STRIT1/DWORF; STRIT1 increases activity by displacing sarcolipin (SLN), phospholamban (PLN) and myoregulin (MRLN). Stabilizes SERCA2 in its E2 state. Functionally, this magnesium-dependent enzyme catalyzes the hydrolysis of ATP coupled with the translocation of calcium from the cytosol to the sarcoplasmic reticulum lumen. Involved in autophagy in response to starvation. Upon interaction with VMP1 and activation, controls ER-isolation membrane contacts for autophagosome formation. Also modulates ER contacts with lipid droplets, mitochondria and endosomes. In coordination with FLVCR2 mediates heme-stimulated switching from mitochondrial ATP synthesis to thermogenesis. Its function is as follows. Involved in the regulation of the contraction/relaxation cycle. Acts as a regulator of TNFSF11-mediated Ca(2+) signaling pathways via its interaction with TMEM64 which is critical for the TNFSF11-induced CREB1 activation and mitochondrial ROS generation necessary for proper osteoclast generation. Association between TMEM64 and SERCA2 in the ER leads to cytosolic Ca(2+) spiking for activation of NFATC1 and production of mitochondrial ROS, thereby triggering Ca(2+) signaling cascades that promote osteoclast differentiation and activation. The protein is Sarcoplasmic/endoplasmic reticulum calcium ATPase 2 (ATP2A2) of Sus scrofa (Pig).